The primary structure comprises 457 residues: Proline-specific permease ProY (457 aa).

Over 1 to 17 the chain is Cytoplasmic; the sequence is MESKNKLKRGLSTRHIR. 2 helical membrane-spanning segments follow: residues 18 to 38 and 39 to 59; these read FMALGSAIGTGLFYGSADAIK and MAGPSVLLAYIIGGIAAYIIM. The Cytoplasmic segment spans residues 60 to 84; that stretch reads RALGEMSVHNPAASSFSRYAQENLG. The chain crosses the membrane as a helical span at residues 85-105; that stretch reads PLAGYITGWTYCFEILIVAIA. The Periplasmic portion of the chain corresponds to 106–113; it reads DVTAFGIY. Residues 114–134 form a helical membrane-spanning segment; sequence MGVWFPTVPHWIWVLSVVLII. At 135-156 the chain is on the cytoplasmic side; sequence CAVNLMSVKVFGELEFWFSFFK. The chain crosses the membrane as a helical span at residues 157–177; it reads VATIIIMIVAGFGIIIWGIGN. The Periplasmic portion of the chain corresponds to 178-197; that stretch reads GGQPTGIHNLWSNGGFFSNG. A helical transmembrane segment spans residues 198–218; that stretch reads WLGMVMSLQMVMFAYGGIEII. Topologically, residues 219–242 are cytoplasmic; the sequence is GITAGEAKDPEKSIPRAINSVPMR. Residues 243–263 traverse the membrane as a helical segment; that stretch reads ILVFYVGTLFVIMSIYPWNQV. The Periplasmic portion of the chain corresponds to 264–277; that stretch reads GTAGSPFVLTFQHM. Residues 278–298 traverse the membrane as a helical segment; it reads GITFAASILNFVVLTASLSAI. At 299 to 331 the chain is on the cytoplasmic side; sequence NSDVFGVGRMLHGMAEQGSAPKIFSKTSRRGIP. A helical membrane pass occupies residues 332 to 352; sequence WVTVLVMTTALLFAVYLNYIM. Topologically, residues 353–355 are periplasmic; it reads PEN. Residues 356–376 traverse the membrane as a helical segment; sequence VFLVIASLATFATVWVWIMIL. The Cytoplasmic portion of the chain corresponds to 377–399; it reads LSQIAFRRRLPPEEVKALKFKVP. A helical transmembrane segment spans residues 400 to 420; the sequence is GGVATTIGGLIFLLFIIGLIG. Residues 421-424 are Periplasmic-facing; sequence YHPD. Residues 425–445 traverse the membrane as a helical segment; sequence TRISLYVGFAWIVVLLIGWMF. Residues 446-457 lie on the Cytoplasmic side of the membrane; the sequence is KRRHDRQLAENQ.

The protein belongs to the amino acid-polyamine-organocation (APC) superfamily. Amino acid transporter (AAT) (TC 2.A.3.1) family.

It is found in the cell inner membrane. Permease that is involved in the transport across the cytoplasmic membrane of proline. In Escherichia coli O157:H7, this protein is Proline-specific permease ProY (proY).